A 453-amino-acid chain; its full sequence is Aspartic proteinase PCS1 (453 aa).

Residues 1–18 form the signal peptide; it reads MFSRFHALFLLLVLSVRT. Residues 19-57 constitute a propeptide, activation peptide; that stretch reads YKCVSSSSSSSSSFSFSSFSSSSSSQTLVLPLKTRITPT. N-linked (GlcNAc...) asparagine glycans are attached at residues Asn-70 and Asn-85. In terms of domain architecture, Peptidase A1 spans 73–438; that stretch reads LTVTLTVGTP…DLQRSRIGLA (366 aa). The active site involves Asp-91. 4 N-linked (GlcNAc...) asparagine glycosylation sites follow: Asn-102, Asn-175, Asn-178, and Asn-243. Asp-304 is an active-site residue. 2 N-linked (GlcNAc...) asparagine glycosylation sites follow: Asn-326 and Asn-395.

The protein belongs to the peptidase A1 family. As to expression, expressed specifically in developing gametophytes and developing seeds.

The protein resides in the endoplasmic reticulum. Embryo-specific aspartic protease that limits programmed cell death during reproductive development. Possesses peptidase activity toward casein in vitro. In Arabidopsis thaliana (Mouse-ear cress), this protein is Aspartic proteinase PCS1 (PCS1).